The primary structure comprises 434 residues: Bcl-2-like protein 13 (434 aa).

The BH4 motif lies at 14–30; it reads ETKYVVLSYLGLLSQEK. The residue at position 35 (Ser35) is a Phosphoserine. The short motif at 97 to 113 is the BH3 element; the sequence is IEDCLAHLGERVSQDLK. The BH1 motif lies at 144–154; the sequence is ASGWNKLLVPL. Residues 190–203 carry the BH2 motif; that stretch reads FIIQQGGWGSVFSL. The disordered stretch occupies residues 224 to 245; sequence LPSDNSGQVSPPESPTVTTSWQ. Residues 226–245 show a composition bias toward polar residues; the sequence is SDNSGQVSPPESPTVTTSWQ. Residues 243–253 form an A repeat; it reads SWQSESLPVSL. Ser256, Ser258, Ser300, Ser343, Ser347, Ser377, and Ser387 each carry phosphoserine. An A; approximate repeat occupies 258-268; the sequence is SWHTESLPVSL. The tract at residues 282-303 is disordered; that stretch reads EVKSLDSSGAGEKSENNSSNSD. A disordered region spans residues 363 to 398; sequence RPEAVERAEGAAQLSEERAGSRKKSHTGEAAAVRGA. Positions 365–382 are enriched in basic and acidic residues; the sequence is EAVERAEGAAQLSEERAG. Residues 409-429 form a helical membrane-spanning segment; the sequence is VLLFGGAAAVAILAVAVGVAL.

Belongs to the Bcl-2 family. Monomer.

It is found in the mitochondrion membrane. May promote the activation of caspase-3 and apoptosis. The polypeptide is Bcl-2-like protein 13 (Bcl2l13) (Mus musculus (Mouse)).